A 372-amino-acid polypeptide reads, in one-letter code: Zinc finger protein dpff-1 (372 aa).

The tract at residues 108–204 (VGPTTESVSD…SRSIVKETKY (97 aa)) is disordered. Residues 109–131 (GPTTESVSDSSNDSTTIRPSRQT) show a composition bias toward polar residues. A compositionally biased stretch (basic and acidic residues) spans 132–141 (QIKEEYRDDY). The segment covering 142–158 (VLDDELSPDEFGSDEDD) has biased composition (acidic residues). Positions 184 to 196 (TTRSSVSRLTPSR) are enriched in polar residues. A C2H2-type zinc finger spans residues 212–235 (YPCDKCSAKYKSLAGLSYHQSYLH). 2 PHD-type zinc fingers span residues 256–314 (SCDF…CKSC) and 316–361 (ICGT…CQVE).

This sequence belongs to the requiem/DPF family.

The protein resides in the nucleus. It is found in the cytoplasm. Its function is as follows. Probable transcription factor, involved in meiosis and stress protection. The chain is Zinc finger protein dpff-1 from Caenorhabditis elegans.